The chain runs to 223 residues: Killer cell lectin-like receptor subfamily B member 1B allele A (223 aa).

Residues 1–43 (MDSTTLVYADLNLARIQEPKHDSPPSLSPDTCRCPRWHRLALK) are Cytoplasmic-facing. The short motif at 6-11 (LVYADL) is the ITIM motif element. The LCK-binding motif signature appears at 32–35 (CRCP). Residues 44–63 (FGCAGLILLVLVVIGLCVLV) traverse the membrane as a helical; Signal-anchor for type II membrane protein segment. At 64–223 (LSVQKSSVQK…LNHETPSNDS (160 aa)) the chain is on the extracellular side. The 120-residue stretch at 93-212 (ECPQDWLSHR…STDNRWICQK (120 aa)) folds into the C-type lectin domain. Intrachain disulfides connect cysteine 122–cysteine 210 and cysteine 189–cysteine 202.

In terms of assembly, homodimer; disulfide-linked. Interacts with tyrosine kinase LCK. Binds PTPN6/SHP-1 in a phosphorylation-dependent manner. As to expression, expressed in NK cells and a subset of T-cells.

It is found in the membrane. In terms of biological role, receptor for CLEC2D/OCIL. Ligand-binding contributes to inhibition of cytotoxic natural killer (NK) cells. May mediate MHC class I-independent 'missing-self' recognition of allografts, tumor cells and virus-infected cells. The chain is Killer cell lectin-like receptor subfamily B member 1B allele A (Klrb1b) from Mus musculus (Mouse).